Here is a 743-residue protein sequence, read N- to C-terminus: NAD(P)H-quinone oxidoreductase subunit 5, chloroplastic (743 aa).

16 helical membrane-spanning segments follow: residues 9-29 (WIIPLVPLPVPMLIGVGLLFF), 40-60 (WAFISILLLSIVMIFSIDLSI), 89-109 (IDPLTSIMSILITTVGILVLI), 125-145 (FAYMSFFNASMLGLVTSSNFI), 147-167 (IYIFWELVGMCSYLLIGFWFT), 185-205 (GDFGLLLGILGLYWLTGSFEF), 219-239 (NEVNLLFVTLCAFLLFAGPVA), 258-278 (TPISALIHAATMVAAGIFLVA), 280-300 (LLPLFIVIPYAMNLISLIGII), 327-347 (LGYMMLALGMGSYRAALFHLI), 354-374 (ALLFLGSGSIIHSMEAIVGYF), 396-416 (TAFLVGTLSLCGIPPLACFWS), 425-445 (WLYSPIFATIAFFTAGLTAFY), 546-566 (ILFVMLVLVLFPLFVGAIGIP), 607-627 (LSVSITYFGILLAYFLYKPFY), and 721-741 (FYLLLYLFSLLFFLIFLFFFF).

The protein belongs to the complex I subunit 5 family. As to quaternary structure, NDH is composed of at least 16 different subunits, 5 of which are encoded in the nucleus.

The protein localises to the plastid. It localises to the chloroplast thylakoid membrane. It carries out the reaction a plastoquinone + NADH + (n+1) H(+)(in) = a plastoquinol + NAD(+) + n H(+)(out). It catalyses the reaction a plastoquinone + NADPH + (n+1) H(+)(in) = a plastoquinol + NADP(+) + n H(+)(out). Its function is as follows. NDH shuttles electrons from NAD(P)H:plastoquinone, via FMN and iron-sulfur (Fe-S) centers, to quinones in the photosynthetic chain and possibly in a chloroplast respiratory chain. The immediate electron acceptor for the enzyme in this species is believed to be plastoquinone. Couples the redox reaction to proton translocation, and thus conserves the redox energy in a proton gradient. The protein is NAD(P)H-quinone oxidoreductase subunit 5, chloroplastic (ndhF) of Citrus sinensis (Sweet orange).